Reading from the N-terminus, the 1066-residue chain is DNA-directed RNA polymerase subunit beta (1066 aa).

This sequence belongs to the RNA polymerase beta chain family. In plastids the minimal PEP RNA polymerase catalytic core is composed of four subunits: alpha, beta, beta', and beta''. When a (nuclear-encoded) sigma factor is associated with the core the holoenzyme is formed, which can initiate transcription.

The protein localises to the plastid. It localises to the chloroplast. The enzyme catalyses RNA(n) + a ribonucleoside 5'-triphosphate = RNA(n+1) + diphosphate. In terms of biological role, DNA-dependent RNA polymerase catalyzes the transcription of DNA into RNA using the four ribonucleoside triphosphates as substrates. This is DNA-directed RNA polymerase subunit beta from Coffea arabica (Arabian coffee).